The chain runs to 775 residues: Endothelin-converting enzyme-like 1 (775 aa).

Residues M1 to E59 lie on the Cytoplasmic side of the membrane. Residues V60–L82 form a helical; Signal-anchor for type II membrane protein membrane-spanning segment. Residues K83–W775 lie on the Lumenal side of the membrane. Residues G98–W775 form the Peptidase M13 domain. 4 disulfide bridges follow: C123/C760, C131/C720, C187/C441, and C649/C772. N-linked (GlcNAc...) asparagine glycans are attached at residues N255 and N322. A Zn(2+)-binding site is contributed by H612. Residue E613 is part of the active site. H616 provides a ligand contact to Zn(2+). Residue N656 is glycosylated (N-linked (GlcNAc...) asparagine). Residue E672 coordinates Zn(2+). D676 functions as the Proton donor in the catalytic mechanism.

It belongs to the peptidase M13 family. It depends on Zn(2+) as a cofactor. Post-translationally, N-glycosylated. Highly expressed in the CNS, in particular in putamen, spinal cord, medulla and subthalamic nucleus. A strong signal was also detected in uterine subepithelial cells and around renal blood vessels. Detected at lower levels in amygdala, caudate, thalamus, pancreas and skeletal muscle. Detected at very low levels in substantia nigra, cerebellum, cortex, corpus callosum and hippocampus.

It is found in the membrane. May contribute to the degradation of peptide hormones and be involved in the inactivation of neuronal peptides. This Homo sapiens (Human) protein is Endothelin-converting enzyme-like 1 (ECEL1).